The sequence spans 250 residues: MVRIAFGSIGDSFSVGSLKAYVAEFIATLLFVFAGVGSAIAYNKLTADAALDPAGLVAVAVAHAFALFVGVSIAANISGGHLNPAVTLGLAVGGNITILTGFFYWIAQLLGSTVACLLLKYVTNGLAVPTHGVAAGLNGLQGVVMEIIITFALVYTVYATAADPKKGSLGTIAPIAIGFIVGANILAAGPFSGGSMNPARSFGPAVVAGDFSQNWIYWAGPLIGGGLAGFIYGDVFIGCHTPLPTSEDYA.

Helical transmembrane passes span 20–42 and 55–77; these read AYVA…AIAY and GLVA…AANI. Residues 83–85 carry the NPA 1 motif; that stretch reads NPA. The next 3 helical transmembrane spans lie at 97 to 119, 140 to 162, and 172 to 194; these read TILT…CLLL, LQGV…ATAA, and IAPI…FSGG. The NPA 2 signature appears at 197 to 199; it reads NPA. Residues 215-237 form a helical membrane-spanning segment; sequence WIYWAGPLIGGGLAGFIYGDVFI.

Belongs to the MIP/aquaporin (TC 1.A.8) family. TIP (TC 1.A.8.10) subfamily. As to expression, roots.

The protein resides in the vacuole membrane. Its function is as follows. Channel protein in tonoplast. These proteins may allow the diffusion of amino acids and/or peptides from the vacuolar compartment to the cytoplasm. The sequence is that of Probable aquaporin TIP-type RB7-5A from Nicotiana tabacum (Common tobacco).